The sequence spans 230 residues: Ribonuclease 3 (230 aa).

In terms of domain architecture, RNase III spans 8–135; sequence IVELKEKLGI…LIGAVYLQTN (128 aa). Residue glutamate 48 participates in Mg(2+) binding. Residue aspartate 52 is part of the active site. The Mg(2+) site is built by aspartate 121 and glutamate 124. Residue glutamate 124 is part of the active site. In terms of domain architecture, DRBM spans 161–230; that stretch reads DYKTMIQELV…AHFAFQKLSK (70 aa).

It belongs to the ribonuclease III family. Homodimer. Mg(2+) serves as cofactor.

Its subcellular location is the cytoplasm. The enzyme catalyses Endonucleolytic cleavage to 5'-phosphomonoester.. Its function is as follows. Digests double-stranded RNA. Involved in the processing of primary rRNA transcript to yield the immediate precursors to the large and small rRNAs (23S and 16S). Processes some mRNAs, and tRNAs when they are encoded in the rRNA operon. Processes pre-crRNA and tracrRNA of type II CRISPR loci if present in the organism. This is Ribonuclease 3 from Natranaerobius thermophilus (strain ATCC BAA-1301 / DSM 18059 / JW/NM-WN-LF).